A 150-amino-acid polypeptide reads, in one-letter code: Catabolic 3-dehydroquinase 1 (150 aa).

The Proton acceptor role is filled by tyrosine 24. Asparagine 75, histidine 81, and aspartate 88 together coordinate substrate. The active-site Proton donor is the histidine 101. Residues 102 to 103 (VS) and arginine 112 contribute to the substrate site.

Belongs to the type-II 3-dehydroquinase family. As to quaternary structure, homododecamer. Adopts a ring-like structure, composed of an arrangement of two hexameric rings stacked on top of one another.

It carries out the reaction 3-dehydroquinate = 3-dehydroshikimate + H2O. It participates in aromatic compound metabolism; 3,4-dihydroxybenzoate biosynthesis; 3,4-dihydroxybenzoate from 3-dehydroquinate: step 1/2. Is involved in the catabolism of quinate. Allows the utilization of quinate as carbon source via the beta-ketoadipate pathway. In Neosartorya fischeri (strain ATCC 1020 / DSM 3700 / CBS 544.65 / FGSC A1164 / JCM 1740 / NRRL 181 / WB 181) (Aspergillus fischerianus), this protein is Catabolic 3-dehydroquinase 1.